The primary structure comprises 1413 residues: Zinc finger SWIM domain-containing protein 8 (1413 aa).

A phosphoserine mark is found at Ser36, Ser48, and Ser53. Residues 45–65 (RKQSAGPNSPTGGGGGGGSGG) form a disordered region. The span at 55-65 (TGGGGGGGSGG) shows a compositional bias: gly residues. An SWIM-type zinc finger spans residues 172–208 (YNVAVMFDRCRVTSCSCTCGAGAKWCTHVVALCLFRI). Positions 600–817 (ESQTHKPQTL…ESHAPHVPNQ (218 aa)) are disordered. Polar residues predominate over residues 604–625 (HKPQTLSSFYSSSRPATASQRS). A compositionally biased stretch (gly residues) spans 704-715 (SRGGYNGRGWGS). A Phosphothreonine modification is found at Thr724. Over residues 729-744 (IDSSAPETTSDSSPTL) the composition is skewed to polar residues. A phosphoserine mark is found at Ser738, Ser741, and Ser745. The segment covering 759-794 (GRGQDSDSISSSSSDSLGSSSSSGSRRASASGGARA) has biased composition (low complexity). The span at 795–811 (KTVEVGRYKGRRPESHA) shows a compositional bias: basic and acidic residues. 2 positions are modified to phosphoserine: Ser852 and Ser1412.

This sequence belongs to the ZSWIM8 family. In terms of assembly, component of the SCF-like E3 ubiquitin-protein ligase complex which contains CUL3, RBX1, ELOB, ELOC and ZSWIM8. Interacts with DAB1.

It localises to the cytoplasm. The protein localises to the cytosol. It participates in protein modification; protein ubiquitination. Substrate recognition component of a SCF-like E3 ubiquitin-protein ligase complex that promotes target-directed microRNA degradation (TDMD), a process that mediates degradation of microRNAs (miRNAs). The SCF-like E3 ubiquitin-protein ligase complex acts by catalyzing ubiquitination and subsequent degradation of AGO proteins (AGO1, AGO2, AGO3 and/or AGO4), thereby exposing miRNAs for degradation. Specifically recognizes and binds AGO proteins when they are engaged with a TDMD target. May also acts as a regulator of axon guidance: specifically recognizes misfolded ROBO3 and promotes its ubiquitination and subsequent degradation. Plays an essential role for proper embryonic development of heart and lung. Controls protein quality of DAB1, a key signal molecule for brain development, thus protecting its signaling strength. Mechanistically, recognizes intrinsically disordered regions of DAB1 and eliminates misfolded DAB1 that cannot be properly phosphorylated. The chain is Zinc finger SWIM domain-containing protein 8 from Bos taurus (Bovine).